Consider the following 754-residue polypeptide: 5-methyltetrahydropteroyltriglutamate--homocysteine methyltransferase (754 aa).

5-methyltetrahydropteroyltri-L-glutamate-binding positions include 15 to 18 and lysine 114; that span reads RELK. Residues 430-432 and glutamate 483 contribute to the L-homocysteine site; that span reads IGS. L-methionine contacts are provided by residues 430 to 432 and glutamate 483; that span reads IGS. 5-methyltetrahydropteroyltri-L-glutamate is bound by residues 514 to 515 and tryptophan 560; that span reads RC. Residue aspartate 598 coordinates L-homocysteine. Residue aspartate 598 coordinates L-methionine. A 5-methyltetrahydropteroyltri-L-glutamate-binding site is contributed by glutamate 604. Residues histidine 641, cysteine 643, and glutamate 665 each contribute to the Zn(2+) site. The active-site Proton donor is the histidine 694. Cysteine 726 serves as a coordination point for Zn(2+).

It belongs to the vitamin-B12 independent methionine synthase family. Requires Zn(2+) as cofactor.

The enzyme catalyses 5-methyltetrahydropteroyltri-L-glutamate + L-homocysteine = tetrahydropteroyltri-L-glutamate + L-methionine. Its pathway is amino-acid biosynthesis; L-methionine biosynthesis via de novo pathway; L-methionine from L-homocysteine (MetE route): step 1/1. Functionally, catalyzes the transfer of a methyl group from 5-methyltetrahydrofolate to homocysteine resulting in methionine formation. This chain is 5-methyltetrahydropteroyltriglutamate--homocysteine methyltransferase, found in Campylobacter jejuni subsp. jejuni serotype O:23/36 (strain 81-176).